The chain runs to 391 residues: Pyruvate dehydrogenase E1 component subunit alpha, testis-specific form, mitochondrial (391 aa).

A mitochondrion-targeting transit peptide spans 1–30; that stretch reads MRKMLATVLSQVFSGMVQKPALRGLLSSLK. 11 residues coordinate pyruvate: His-93, Tyr-119, Arg-120, Ala-158, Gly-166, Val-168, Asp-197, Gly-198, Ala-199, Asn-226, and Tyr-228. The thiamine diphosphate site is built by Tyr-119 and Arg-120. The thiamine diphosphate site is built by Gly-166, Val-168, Asp-197, Gly-198, Ala-199, and Asn-226. Mg(2+) is bound at residue Asp-197. Mg(2+) is bound by residues Asn-226 and Tyr-228. His-293 provides a ligand contact to thiamine diphosphate. 2 positions are modified to phosphoserine: Ser-294 and Ser-296. Position 301 is a phosphoserine; by PDK3 (Ser-301).

Heterotetramer of two PDHA2 and two PDHB subunits. The heterotetramer interacts with DLAT, and is part of the multimeric pyruvate dehydrogenase complex that contains multiple copies of pyruvate dehydrogenase (E1), dihydrolipoamide acetyltransferase (DLAT, E2) and lipoamide dehydrogenase (DLD, E3). These subunits are bound to an inner core composed of about 48 DLAT and 12 PDHX molecules. It depends on thiamine diphosphate as a cofactor. Mg(2+) is required as a cofactor. As to expression, testis.

It is found in the mitochondrion matrix. It carries out the reaction N(6)-[(R)-lipoyl]-L-lysyl-[protein] + pyruvate + H(+) = N(6)-[(R)-S(8)-acetyldihydrolipoyl]-L-lysyl-[protein] + CO2. Its activity is regulated as follows. Pyruvate dehydrogenase activity is inhibited by phosphorylation of PDHA2; it is reactivated by dephosphorylation. The pyruvate dehydrogenase complex catalyzes the overall conversion of pyruvate to acetyl-CoA and CO(2), and thereby links the glycolytic pathway to the tricarboxylic cycle. This chain is Pyruvate dehydrogenase E1 component subunit alpha, testis-specific form, mitochondrial (Pdha2), found in Rattus norvegicus (Rat).